The chain runs to 69 residues: MQKSKLNTTLNGLKDFLHQCRRVLMISRKPTRQEYITISKVTGLGICLLGFVGFVIHVPITYLKALIKP.

The chain crosses the membrane as a helical span at residues 43-63 (GLGICLLGFVGFVIHVPITYL).

This sequence belongs to the SecE/SEC61-gamma family. Component of the Sec protein translocase complex. Heterotrimer consisting of SecY (alpha), SecG (beta) and SecE (gamma) subunits. The heterotrimers can form oligomers, although 1 heterotrimer is thought to be able to translocate proteins. Interacts with the ribosome. May interact with SecDF, and other proteins may be involved.

Its subcellular location is the cell membrane. Functionally, essential subunit of the Sec protein translocation channel SecYEG. Clamps together the 2 halves of SecY. May contact the channel plug during translocation. The sequence is that of Protein translocase subunit SecE from Methanococcus maripaludis (strain DSM 14266 / JCM 13030 / NBRC 101832 / S2 / LL).